A 104-amino-acid chain; its full sequence is Circadian clock oscillator protein KaiB (104 aa).

The protein belongs to the KaiB family. The KaiABC complex composition changes during the circadian cycle to control KaiC phosphorylation. Complexes KaiC(6), KaiA(2-4):KaiC(6), KaiB(6):KaiC(6) and KaiC(6):KaiB(6):KaiA(12) are among the most important forms, many form cooperatively. Undergoes a major conformational rearrangment; in the free state forms homotetramers as a dimer of dimers. When bound to the CI domain of KaiC switches to a monomeric thioredoxin-fold (KaiB(fs)). KaiB(fs) binds CikA, leading it to dephosphorylate phospho-RpaA.

In terms of biological role, key component of the KaiABC oscillator complex, which constitutes the main circadian regulator in cyanobacteria. Complex composition changes during the circadian cycle to control KaiC phosphorylation. KaiA stimulates KaiC autophosphorylation, while KaiB sequesters KaiA, leading to KaiC autodephosphorylation. Phospho-Ser-431 KaiC accumulation triggers binding of KaiB to form the KaiB(6):KaiC(6) complex, leading to changes in output regulators CikA and SasA. KaiB switches to a thioredoxin-like fold (KaiB(fs)) when bound to KaiC. KaiB(6):KaiC(6) formation exposes a site for KaiA binding that sequesters KaiA from KaiC, making the KaiC(6):KaiB(6):KaiA(12) complex that results in KaiC autodephosphorylation. Its function is as follows. A metamorphic protein which reversibly switches between an inactive tetrameric fold and a rare, thioredoxin-like monomeric fold (KaiB(fs)). KaiB(fs) binds phospho-KaiC, KaiA and CikA. KaiA and CikA compete for binding to KaiB(fs), and KaiB(fs) and SasA compete for binding to KaiC, thus the clock oscillator and output signal pathway are tightly coupled. This chain is Circadian clock oscillator protein KaiB, found in Nostoc punctiforme (strain ATCC 29133 / PCC 73102).